A 286-amino-acid chain; its full sequence is Pyridoxal kinase PdxY (286 aa).

Residues Ser9 and 44–45 contribute to the substrate site; that span reads TQ. The ATP site is built by Asp111, Glu148, and Lys181. A substrate-binding site is contributed by Asp222.

The protein belongs to the pyridoxine kinase family. PdxY subfamily. In terms of assembly, homodimer. Requires Mg(2+) as cofactor.

The catalysed reaction is pyridoxal + ATP = pyridoxal 5'-phosphate + ADP + H(+). It functions in the pathway cofactor metabolism; pyridoxal 5'-phosphate salvage; pyridoxal 5'-phosphate from pyridoxal: step 1/1. Pyridoxal kinase involved in the salvage pathway of pyridoxal 5'-phosphate (PLP). Catalyzes the phosphorylation of pyridoxal to PLP. The polypeptide is Pyridoxal kinase PdxY (Pasteurella multocida (strain Pm70)).